A 368-amino-acid polypeptide reads, in one-letter code: Phospho-N-acetylmuramoyl-pentapeptide-transferase (368 aa).

The next 9 membrane-spanning stretches (helical) occupy residues 23 to 43 (YLTFRASAAAITALLIIIFAG), 72 to 92 (VPTMGGLMIIFAIEVSAFLWA), 98 to 118 (HVWLIMLAVFWMGLIGFIDDY), 139 to 159 (VTLGLVIGFYTWNDPVFSVLL), 170 to 190 (LSVDYGIFYIPVVIFIITAVS), 201 to 221 (GLAAGNAAIVTFALGVFAYLC), 238 to 258 (AGEVAVVSMAIVMACVGFLWF), 281 to 301 (VIALMIKQELLLPVLAGVFFV), and 345 to 365 (KIVIRFWIISILLFLTSLMTL).

Belongs to the glycosyltransferase 4 family. MraY subfamily. Mg(2+) is required as a cofactor.

It is found in the cell inner membrane. The catalysed reaction is UDP-N-acetyl-alpha-D-muramoyl-L-alanyl-gamma-D-glutamyl-meso-2,6-diaminopimeloyl-D-alanyl-D-alanine + di-trans,octa-cis-undecaprenyl phosphate = di-trans,octa-cis-undecaprenyl diphospho-N-acetyl-alpha-D-muramoyl-L-alanyl-D-glutamyl-meso-2,6-diaminopimeloyl-D-alanyl-D-alanine + UMP. It participates in cell wall biogenesis; peptidoglycan biosynthesis. In terms of biological role, catalyzes the initial step of the lipid cycle reactions in the biosynthesis of the cell wall peptidoglycan: transfers peptidoglycan precursor phospho-MurNAc-pentapeptide from UDP-MurNAc-pentapeptide onto the lipid carrier undecaprenyl phosphate, yielding undecaprenyl-pyrophosphoryl-MurNAc-pentapeptide, known as lipid I. This Chlorobaculum tepidum (strain ATCC 49652 / DSM 12025 / NBRC 103806 / TLS) (Chlorobium tepidum) protein is Phospho-N-acetylmuramoyl-pentapeptide-transferase.